An 811-amino-acid chain; its full sequence is Zinc finger protein 839 (811 aa).

Residues 197 to 222 (FKCQTCEKSYIGKGGLARHFKLNPGH) form a C2H2-type zinc finger. Disordered stretches follow at residues 329–349 (QRRAAQLPGGPAAAGEQRASP), 455–555 (PDNL…NGSV), and 612–654 (ALEH…AEAG). The segment covering 476 to 485 (SSEKREREAA) has biased composition (basic and acidic residues). Over residues 501–510 (SNDTTESLAA) the composition is skewed to polar residues.

The chain is Zinc finger protein 839 (ZNF839) from Homo sapiens (Human).